The following is a 93-amino-acid chain: HIG1 domain family member 1A, mitochondrial (93 aa).

The residue at position 2 (serine 2) is an N-acetylserine. The HIG1 domain occupies 2-93 (STNTDLSLSS…YQEFWAKRKP (92 aa)). A Phosphoserine modification is found at serine 8. The next 2 helical transmembrane spans lie at 28–48 (PFVP…LYKL) and 69–89 (GFVV…EFWA). Residues 90 to 93 (KRKP) lie on the Mitochondrial matrix side of the membrane.

In terms of assembly, associates with cytochrome c oxidase (COX, complex IV); proposed complex component. Also associates with respiratory chain supercomplexes. As to expression, expressed in brain and spinal cord.

Its subcellular location is the mitochondrion membrane. It is found in the mitochondrion inner membrane. Its function is as follows. Proposed subunit of cytochrome c oxidase (COX, complex IV), which is the terminal component of the mitochondrial respiratory chain that catalyzes the reduction of oxygen to water. May play a role in the assembly of respiratory supercomplexes. The protein is HIG1 domain family member 1A, mitochondrial (Higd1a) of Rattus norvegicus (Rat).